The chain runs to 290 residues: Fructose-1,6-bisphosphatase class 1 (290 aa).

Positions 78, 96, 98, and 99 each coordinate Mg(2+). Residues 99–102, Tyr-201, and Lys-226 each bind substrate; that span reads DGSS. Position 232 (Glu-232) interacts with Mg(2+).

The protein belongs to the FBPase class 1 family. Homotetramer. Mg(2+) is required as a cofactor.

It localises to the cytoplasm. The enzyme catalyses beta-D-fructose 1,6-bisphosphate + H2O = beta-D-fructose 6-phosphate + phosphate. The protein operates within carbohydrate biosynthesis; gluconeogenesis. The protein is Fructose-1,6-bisphosphatase class 1 of Helicobacter pylori (strain HPAG1).